The primary structure comprises 464 residues: Methylenetetrahydrofolate--tRNA-(uracil-5-)-methyltransferase TrmFO (464 aa).

13-18 provides a ligand contact to FAD; the sequence is GGGLAG.

This sequence belongs to the MnmG family. TrmFO subfamily. FAD serves as cofactor.

The protein localises to the cytoplasm. It carries out the reaction uridine(54) in tRNA + (6R)-5,10-methylene-5,6,7,8-tetrahydrofolate + NADH + H(+) = 5-methyluridine(54) in tRNA + (6S)-5,6,7,8-tetrahydrofolate + NAD(+). The catalysed reaction is uridine(54) in tRNA + (6R)-5,10-methylene-5,6,7,8-tetrahydrofolate + NADPH + H(+) = 5-methyluridine(54) in tRNA + (6S)-5,6,7,8-tetrahydrofolate + NADP(+). Functionally, catalyzes the folate-dependent formation of 5-methyl-uridine at position 54 (M-5-U54) in all tRNAs. The polypeptide is Methylenetetrahydrofolate--tRNA-(uracil-5-)-methyltransferase TrmFO (Bartonella bacilliformis (strain ATCC 35685 / KC583 / Herrer 020/F12,63)).